Reading from the N-terminus, the 375-residue chain is Tyrosine--tRNA ligase (375 aa).

L-tyrosine-binding residues include tyrosine 37, tyrosine 168, glutamine 172, aspartate 175, and glutamine 190. Positions 251-255 (KMSKS) match the 'KMSKS' region motif. ATP is bound at residue lysine 254.

It belongs to the class-I aminoacyl-tRNA synthetase family. TyrS type 4 subfamily. As to quaternary structure, homodimer.

The protein resides in the cytoplasm. The enzyme catalyses tRNA(Tyr) + L-tyrosine + ATP = L-tyrosyl-tRNA(Tyr) + AMP + diphosphate + H(+). In terms of biological role, catalyzes the attachment of tyrosine to tRNA(Tyr) in a two-step reaction: tyrosine is first activated by ATP to form Tyr-AMP and then transferred to the acceptor end of tRNA(Tyr). The sequence is that of Tyrosine--tRNA ligase from Pyrococcus abyssi (strain GE5 / Orsay).